Consider the following 200-residue polypeptide: Recombination protein RecR (200 aa).

The segment at 59–74 adopts a C4-type zinc-finger fold; that stretch reads CSVCFHLSADPVCDIC. The Toprim domain occupies 82 to 176; the sequence is TVICVVADSR…RVTRIAFGLP (95 aa).

Belongs to the RecR family.

Its function is as follows. May play a role in DNA repair. It seems to be involved in an RecBC-independent recombinational process of DNA repair. It may act with RecF and RecO. The polypeptide is Recombination protein RecR (Acaryochloris marina (strain MBIC 11017)).